A 447-amino-acid polypeptide reads, in one-letter code: MERKMYKSTVFPICCLLFALFDRGNALYGSSSPVLQLTPSNFKSKVLNSNGVVLVEFFAPWCGHCQSLTPTWEKVASTLKGIATVAAIDADAHKSVSQDYGVRGFPTIKVFVPGKPPIDYQGARDAKSISQFAIKQIKALLKDRLDGKTSGTKNGGGSSEKKKSEPSASVELNSSNFDELVTESKELWIVEFFAPWCGHCKKLAPEWKKAANNLKGKVKLGHVNCDAEQSIKSRFKVQGFPTILVFGSDKSSPVPYEGARSASAIESFALEQLESNAGPAEVTELTGPDVMEDKCGSAAICFVSFLPDILDSKAEGRNKYLEMLLSVADKFKKDPYGFVWVAAGKQPDLEKRVGVGGYGYPAMVALNAKKGAYAPLKSGFEVKHLKDFVKEAAKGGKGNLPIDGTMEIVKTEAWDGKDGEVVDADEFSLEDLMGNDDEASTESKDDL.

The first 26 residues, 1–26 (MERKMYKSTVFPICCLLFALFDRGNA), serve as a signal peptide directing secretion. Thioredoxin domains lie at 27–139 (LYGS…QIKA) and 161–275 (KKKS…QLES). Catalysis depends on nucleophile residues Cys-62 and Cys-65. Cys-62 and Cys-65 are oxidised to a cystine. Residues 146–170 (DGKTSGTKNGGGSSEKKKSEPSASV) are disordered. Residue Asn-173 is glycosylated (N-linked (GlcNAc...) asparagine). Catalysis depends on nucleophile residues Cys-197 and Cys-200. Cys-197 and Cys-200 are disulfide-bonded. The Prevents secretion from ER signature appears at 444–447 (KDDL).

It belongs to the protein disulfide isomerase family. As to expression, widely expressed.

Its subcellular location is the endoplasmic reticulum lumen. The catalysed reaction is Catalyzes the rearrangement of -S-S- bonds in proteins.. Its function is as follows. Acts as a protein-folding catalyst that interacts with nascent polypeptides to catalyze the formation, isomerization, and reduction or oxidation of disulfide bonds. In Arabidopsis thaliana (Mouse-ear cress), this protein is Protein disulfide-isomerase like 2-2 (PDIL2-2).